We begin with the raw amino-acid sequence, 397 residues long: Xylose isomerase (397 aa).

Residues H54 and D57 contribute to the active site. Residues E181, E217, H220, D245, D255, D257, and D293 each coordinate Mg(2+).

This sequence belongs to the xylose isomerase family. Homotetramer. The cofactor is Mg(2+).

It localises to the cytoplasm. It carries out the reaction alpha-D-xylose = alpha-D-xylulofuranose. The chain is Xylose isomerase from Clavibacter michiganensis subsp. michiganensis (strain NCPPB 382).